Consider the following 124-residue polypeptide: Small ribosomal subunit protein uS12 (124 aa).

Asp89 is modified (3-methylthioaspartic acid).

It belongs to the universal ribosomal protein uS12 family. Part of the 30S ribosomal subunit. Contacts proteins S8 and S17. May interact with IF1 in the 30S initiation complex.

With S4 and S5 plays an important role in translational accuracy. Functionally, interacts with and stabilizes bases of the 16S rRNA that are involved in tRNA selection in the A site and with the mRNA backbone. Located at the interface of the 30S and 50S subunits, it traverses the body of the 30S subunit contacting proteins on the other side and probably holding the rRNA structure together. The combined cluster of proteins S8, S12 and S17 appears to hold together the shoulder and platform of the 30S subunit. This Hydrogenovibrio crunogenus (strain DSM 25203 / XCL-2) (Thiomicrospira crunogena) protein is Small ribosomal subunit protein uS12.